The sequence spans 208 residues: Dephospho-CoA kinase (208 aa).

The region spanning 5 to 201 (IVALTGGIGS…QRYLALAASA (197 aa)) is the DPCK domain. 13-18 (GSGKST) contacts ATP.

It belongs to the CoaE family.

It localises to the cytoplasm. It carries out the reaction 3'-dephospho-CoA + ATP = ADP + CoA + H(+). Its pathway is cofactor biosynthesis; coenzyme A biosynthesis; CoA from (R)-pantothenate: step 5/5. Catalyzes the phosphorylation of the 3'-hydroxyl group of dephosphocoenzyme A to form coenzyme A. The chain is Dephospho-CoA kinase from Sodalis glossinidius (strain morsitans).